Reading from the N-terminus, the 409-residue chain is uncharacterized protein (409 aa).

4 consecutive transmembrane segments (helical) span residues 20–40, 283–303, 344–364, and 372–392; these read ILTMLGVIIGIAAIIAIVSML, FALLLGGIASISLLVGGIGVM, IGGILGVLAGFGIAKLLTVIF, and IPAVVGALIFSMAVGIIFGLL.

It belongs to the ABC-4 integral membrane protein family.

It localises to the cell membrane. This is an uncharacterized protein from Bacillus subtilis (strain 168).